The primary structure comprises 459 residues: Prenyltransferase penI (459 aa).

L-tryptophan is bound by residues 107 to 108 and Glu111; that span reads VV. Substrate-binding residues include Arg126, Arg276, Lys278, Tyr280, and Tyr384.

It belongs to the tryptophan dimethylallyltransferase family.

The enzyme catalyses quinolinone B + dimethylallyl diphosphate = peniprequinolone + diphosphate. The protein operates within secondary metabolite biosynthesis. Its pathway is alkaloid biosynthesis. It participates in mycotoxin biosynthesis. Functionally, prenyltransferase; part of the gene cluster that mediates the biosynthesis of penigequinolones, potent insecticidal alkaloids that contain a highly modified 10-carbon prenyl group. The first stage is catalyzed by the nonribosomal peptide synthetase penN that condenses anthranilic acid and O-methyl-L-tyrosine to produce 4'-methoxycyclopeptin. 4'-methoxycyclopeptin is then converted to 4'-methoxydehydrocyclopeptin by the ketoglutarate-dependent dioxygenase penM through dehydrogenation to form a double bond between C-alpha and C-beta of the O-methyltyrosine side chain. PenM also converts its first product methoxydehydrocyclopeptin to 4'-methoxycyclopenin. The following conversion of 4'methoxycyclopenin into 4'-methoxyviridicatin is catalyzed by the cyclopenase penL. 4'-methoxyviridicatin is the precursor of quinolone natural products, and is further converted to quinolinone B. The prenyltransferase penI then catalyzes the canonical Friedel-Crafts alkylation of quinolinone B with dimethylallyl cation to yield dimethylallyl quinolone, which is subjected to FAD-dependent dehydrogenation by the FAD-linked oxidoreductase penH to yield conjugated aryl diene. The delta(3') double bond then serves as the site of the second alkylation with DMAPP catalyzed by the prenyltransferase penG to yield a carbenium ion intermediate, which can be attacked by H(2)O to yield a styrenyl quinolone containing a C3'-hydroxyprenyl chain, or undergo cyclization to yield yaequinolones J1 and J2. The conversion of the styrenyl quinolone into the tetrahydrofuran-containing yaequinolone C is performed by the FAD-dependent monooxygenase penE and involves epoxidation of the terminal C7'-C8' olefin, followed by epoxide ring opening initiated by the C3' hydroxyl group. The predicted cysteine hydrolase penJ acts as an epoxide hydrolase that enhances the rate of the 5-exo-tet cyclization step, increasing the yield of yaequinolone C. PenF catalyzes the cationic rearrangement of the epoxide formed by penE (before ring opening to produce yaequinolone C) into yaequinolone D. Finally, the short-chain dehydrogenase/reductase (SDR)-like reductase penD, catalyzes both the dehydration of yaequinolone D and the reduction of the resulting oxonium to yield penigequinolone. In Penicillium thymicola, this protein is Prenyltransferase penI.